Reading from the N-terminus, the 209-residue chain is Large ribosomal subunit protein uL3 (209 aa).

The interval Asn127–Gly164 is disordered.

This sequence belongs to the universal ribosomal protein uL3 family. In terms of assembly, part of the 50S ribosomal subunit. Forms a cluster with proteins L14 and L19.

In terms of biological role, one of the primary rRNA binding proteins, it binds directly near the 3'-end of the 23S rRNA, where it nucleates assembly of the 50S subunit. In Chlorobium phaeobacteroides (strain BS1), this protein is Large ribosomal subunit protein uL3.